Consider the following 100-residue polypeptide: MARGRVVCIGDAGCDCTPGVFRATAGGMPVLVVIESGTGGDQMARKATSPGKPAPTSGQYRPVGGGNEVTVPKGHRLPPSPKPGQKWVNVDPTKNKSGRG.

The tract at residues 40-100 is disordered; that stretch reads GDQMARKATS…DPTKNKSGRG (61 aa).

This is an uncharacterized protein from Mycobacterium tuberculosis (strain ATCC 25618 / H37Rv).